A 235-amino-acid chain; its full sequence is Probable transcriptional regulatory protein Ccon26_04940 (235 aa).

It belongs to the TACO1 family.

The protein resides in the cytoplasm. The chain is Probable transcriptional regulatory protein Ccon26_04940 from Campylobacter concisus (strain 13826).